A 261-amino-acid chain; its full sequence is 5'-nucleotidase SurE (261 aa).

4 residues coordinate a divalent metal cation: D8, D9, S39, and N91.

This sequence belongs to the SurE nucleotidase family. It depends on a divalent metal cation as a cofactor.

It localises to the cytoplasm. It carries out the reaction a ribonucleoside 5'-phosphate + H2O = a ribonucleoside + phosphate. Nucleotidase that shows phosphatase activity on nucleoside 5'-monophosphates. This chain is 5'-nucleotidase SurE, found in Polaromonas naphthalenivorans (strain CJ2).